Reading from the N-terminus, the 444-residue chain is Phosphoglucosamine mutase (444 aa).

Residue Ser102 is the Phosphoserine intermediate of the active site. Mg(2+) is bound by residues Ser102, Asp241, Asp243, and Asp245. Ser102 is subject to Phosphoserine.

It belongs to the phosphohexose mutase family. Mg(2+) is required as a cofactor. In terms of processing, activated by phosphorylation.

It carries out the reaction alpha-D-glucosamine 1-phosphate = D-glucosamine 6-phosphate. In terms of biological role, catalyzes the conversion of glucosamine-6-phosphate to glucosamine-1-phosphate. The chain is Phosphoglucosamine mutase from Histophilus somni (strain 129Pt) (Haemophilus somnus).